The chain runs to 244 residues: GTP cyclohydrolase 1 type 2 homolog (244 aa).

5 residues coordinate a divalent metal cation: H65, H66, D102, H216, and E220.

This sequence belongs to the GTP cyclohydrolase I type 2/NIF3 family. Homohexamer; trimer of dimers, that forms a hollow cage-like architecture.

In terms of biological role, DNA-binding protein exhibiting the ability to bind to both single-stranded and double-stranded DNA. In Methanocaldococcus jannaschii (strain ATCC 43067 / DSM 2661 / JAL-1 / JCM 10045 / NBRC 100440) (Methanococcus jannaschii), this protein is GTP cyclohydrolase 1 type 2 homolog.